The chain runs to 98 residues: Large ribosomal subunit protein uL23 (98 aa).

The protein belongs to the universal ribosomal protein uL23 family. In terms of assembly, part of the 50S ribosomal subunit. Contacts protein L29, and trigger factor when it is bound to the ribosome.

Its function is as follows. One of the early assembly proteins it binds 23S rRNA. One of the proteins that surrounds the polypeptide exit tunnel on the outside of the ribosome. Forms the main docking site for trigger factor binding to the ribosome. The protein is Large ribosomal subunit protein uL23 of Bordetella bronchiseptica (strain ATCC BAA-588 / NCTC 13252 / RB50) (Alcaligenes bronchisepticus).